The following is a 507-amino-acid chain: Alpha-amylase 2 (507 aa).

The first 20 residues, 1–20, serve as a signal peptide directing secretion; sequence MKFATILSTTALALSSLVAS. The cysteines at positions 62 and 70 are disulfide-linked. Tryptophan 115 is a substrate binding site. Asparagine 153 contacts Ca(2+). Histidine 154 contacts substrate. Residues cysteine 182 and cysteine 196 are joined by a disulfide bond. Positions 194 and 207 each coordinate Ca(2+). Asparagine 229 is a glycosylation site (N-linked (GlcNAc...) asparagine). Arginine 236 provides a ligand contact to substrate. Residues aspartate 238, histidine 242, and glutamate 262 each contribute to the Ca(2+) site. Aspartate 238 serves as the catalytic Nucleophile. 241–242 contributes to the substrate binding site; the sequence is KH. The active-site Proton donor is glutamate 262. Glycine 266 serves as a coordination point for substrate. Cysteine 272 and cysteine 315 are disulfide-bonded. Residues aspartate 329 and arginine 376 each coordinate substrate. The cysteines at positions 470 and 505 are disulfide-linked.

This sequence belongs to the glycosyl hydrolase 13 family. Ca(2+) is required as a cofactor.

The catalysed reaction is Endohydrolysis of (1-&gt;4)-alpha-D-glucosidic linkages in polysaccharides containing three or more (1-&gt;4)-alpha-linked D-glucose units.. This chain is Alpha-amylase 2 (SWA2), found in Schwanniomyces occidentalis (Yeast).